The sequence spans 99 residues: Plastocyanin (99 aa).

In terms of domain architecture, Plastocyanin-like spans 1-99 (VEILLGGEDG…AGMVGKVTVN (99 aa)). Cu cation contacts are provided by H37, C84, H87, and M92.

It belongs to the plastocyanin family. Requires Cu(2+) as cofactor.

The protein resides in the plastid. It is found in the chloroplast thylakoid membrane. Its function is as follows. Participates in electron transfer between P700 and the cytochrome b6-f complex in photosystem I. The sequence is that of Plastocyanin (PETE) from Sambucus nigra (European elder).